The sequence spans 184 residues: ATP synthase subunit b, chloroplastic (184 aa).

A helical membrane pass occupies residues 31-53; the sequence is LINLSVVLGVLIYFGKGVLSNLL.

This sequence belongs to the ATPase B chain family. In terms of assembly, F-type ATPases have 2 components, F(1) - the catalytic core - and F(0) - the membrane proton channel. F(1) has five subunits: alpha(3), beta(3), gamma(1), delta(1), epsilon(1). F(0) has four main subunits: a(1), b(1), b'(1) and c(10-14). The alpha and beta chains form an alternating ring which encloses part of the gamma chain. F(1) is attached to F(0) by a central stalk formed by the gamma and epsilon chains, while a peripheral stalk is formed by the delta, b and b' chains.

The protein localises to the plastid. It is found in the chloroplast thylakoid membrane. F(1)F(0) ATP synthase produces ATP from ADP in the presence of a proton or sodium gradient. F-type ATPases consist of two structural domains, F(1) containing the extramembraneous catalytic core and F(0) containing the membrane proton channel, linked together by a central stalk and a peripheral stalk. During catalysis, ATP synthesis in the catalytic domain of F(1) is coupled via a rotary mechanism of the central stalk subunits to proton translocation. Functionally, component of the F(0) channel, it forms part of the peripheral stalk, linking F(1) to F(0). The polypeptide is ATP synthase subunit b, chloroplastic (Cycas taitungensis (Prince sago)).